We begin with the raw amino-acid sequence, 461 residues long: Divalent metal cation transporter MntH (461 aa).

11 helical membrane passes run 56 to 76 (AMAF…PGNW), 89 to 109 (TLLA…SLCA), 132 to 152 (AMVL…AEVI), 160 to 180 (LIFG…VFLI), 193 to 213 (ALVI…LALA), 230 to 250 (IVTN…TVMP), 285 to 305 (IALM…AATF), 322 to 342 (LLAP…ALLC), 378 to 398 (AIAI…GTGQ), 399 to 419 (LLIL…FPLV), and 433 to 453 (SPLW…ALNV).

It belongs to the NRAMP family.

It localises to the cell inner membrane. In terms of biological role, h(+)-stimulated, divalent metal cation uptake system. This is Divalent metal cation transporter MntH from Agrobacterium fabrum (strain C58 / ATCC 33970) (Agrobacterium tumefaciens (strain C58)).